A 457-amino-acid chain; its full sequence is Glutamate--tRNA ligase 2 (457 aa).

Residues 9 to 19 (PSPTGRIHIGN) carry the 'HIGH' region motif. Residues 250–254 (GLSKR) carry the 'KMSKS' region motif. Lys-253 is an ATP binding site.

Belongs to the class-I aminoacyl-tRNA synthetase family. Glutamate--tRNA ligase type 1 subfamily. Monomer.

It is found in the cytoplasm. The enzyme catalyses tRNA(Glu) + L-glutamate + ATP = L-glutamyl-tRNA(Glu) + AMP + diphosphate. Its function is as follows. Catalyzes the attachment of glutamate to tRNA(Glu) in a two-step reaction: glutamate is first activated by ATP to form Glu-AMP and then transferred to the acceptor end of tRNA(Glu). The protein is Glutamate--tRNA ligase 2 of Mesorhizobium japonicum (strain LMG 29417 / CECT 9101 / MAFF 303099) (Mesorhizobium loti (strain MAFF 303099)).